Here is a 388-residue protein sequence, read N- to C-terminus: MNIHEYQGKEIFRSMGVAVPEGRVAFTAEEAVEKAKELDTEIYVVKAQIHAGGRGKAGGVKIAKSLSEVETYANELLGKQLVTHQTGPEGKEVKRLYIEQGCDIQKEYYVGFVIDRATDRITLMASEEGGTEIEEVAAKTPEKIFKETIDPVVGLSPYQARRIAFNINIPKESINKAAKFLISLYNVFIEKDCSIVEINPLVTTGEGEVLALDAKINFDDNALFRHKDIQELRDLEEEDPKEIEASKYDLSYIALDGDIGCMVNGAGLAMATMDTINHFGGNPANFLDVGGGATKEKVTEAFKIILGDDNVKGIFVNIFGGIMKCDVIAEGIVAAVKEVELTLPLVVRLEGTNVERGKEILNESGLAIEPAATMAEGAQKIVKLVKEA.

One can recognise an ATP-grasp domain in the interval 9 to 244; the sequence is KEIFRSMGVA…LEEEDPKEIE (236 aa). ATP-binding positions include Lys46, 53 to 55, Glu99, Cys102, and Glu107; that span reads GRG. 2 residues coordinate Mg(2+): Asn199 and Asp213. Residues Asn264 and 321 to 323 each bind substrate; that span reads GIM.

The protein belongs to the succinate/malate CoA ligase beta subunit family. As to quaternary structure, heterotetramer of two alpha and two beta subunits. It depends on Mg(2+) as a cofactor.

The catalysed reaction is succinate + ATP + CoA = succinyl-CoA + ADP + phosphate. The enzyme catalyses GTP + succinate + CoA = succinyl-CoA + GDP + phosphate. It participates in carbohydrate metabolism; tricarboxylic acid cycle; succinate from succinyl-CoA (ligase route): step 1/1. Succinyl-CoA synthetase functions in the citric acid cycle (TCA), coupling the hydrolysis of succinyl-CoA to the synthesis of either ATP or GTP and thus represents the only step of substrate-level phosphorylation in the TCA. The beta subunit provides nucleotide specificity of the enzyme and binds the substrate succinate, while the binding sites for coenzyme A and phosphate are found in the alpha subunit. The chain is Succinate--CoA ligase [ADP-forming] subunit beta from Staphylococcus haemolyticus (strain JCSC1435).